Here is a 230-residue protein sequence, read N- to C-terminus: Ribonuclease 3 (230 aa).

One can recognise an RNase III domain in the interval 5–134 (NDTISKVINY…LIGAIYIDGG (130 aa)). Glutamate 47 lines the Mg(2+) pocket. The active site involves aspartate 51. Residues asparagine 120 and glutamate 123 each contribute to the Mg(2+) site. Glutamate 123 is a catalytic residue. The 70-residue stretch at 159–228 (DPKTSLQEWT…AELILEKIKK (70 aa)) folds into the DRBM domain.

The protein belongs to the ribonuclease III family. In terms of assembly, homodimer. It depends on Mg(2+) as a cofactor.

The protein localises to the cytoplasm. It catalyses the reaction Endonucleolytic cleavage to 5'-phosphomonoester.. Digests double-stranded RNA. Involved in the processing of primary rRNA transcript to yield the immediate precursors to the large and small rRNAs (23S and 16S). Processes some mRNAs, and tRNAs when they are encoded in the rRNA operon. Processes pre-crRNA and tracrRNA of type II CRISPR loci if present in the organism. In Wolbachia pipientis subsp. Culex pipiens (strain wPip), this protein is Ribonuclease 3.